The sequence spans 677 residues: Envelope glycoprotein (677 aa).

An N-terminal signal peptide occupies residues 1–33 (MGSGYQLLQLPRERFRKTSFLVWVIILFQRAIS). Residues 34-651 (MPLGIVTNST…DLNLWTGWRQ (618 aa)) are Extracellular-facing. An N-linked (GlcNAc...) asparagine; by host glycan is attached at asparagine 41. Disulfide bonds link cysteine 54/cysteine 610, cysteine 109/cysteine 136, cysteine 122/cysteine 148, cysteine 512/cysteine 557, and cysteine 602/cysteine 609. The receptor-binding stretch occupies residues 55–202 (RDKLSSTSQL…HFWKATPAHE (148 aa)). N-linked (GlcNAc...) asparagine; by host glycans are attached at residues asparagine 205, asparagine 239, asparagine 258, asparagine 269, asparagine 297, asparagine 317, asparagine 318, asparagine 339, asparagine 406, asparagine 420, asparagine 435, and asparagine 463. Residues 306–486 (NLHFQILSTH…PSQPGLTINT (181 aa)) form a mucin-like region region. The segment covering 315 to 326 (HTNNSSDQSPAG) has biased composition (polar residues). Disordered stretches follow at residues 315 to 349 (HTNN…TDSP), 370 to 483 (NGET…PGLT), and 489 to 508 (KVAD…RQNT). Composition is skewed to polar residues over residues 370-421 (NGET…ASNE), 428-445 (MNSI…QTKA), and 458-472 (PQET…TSPG). The interval 525 to 540 (GAAAGLAWIPYFGPAA) is fusion peptide. The stretch at 555–596 (LICGLRQLANETTQALQLFLRATTELRTYSLLNRKAIDFLLQ) forms a coiled coil. Asparagine 564 carries an N-linked (GlcNAc...) asparagine; by host glycan. A coiled-coil region spans residues 616-635 (WTKNITDEINQIKHDFIDNP). Asparagine 619 carries N-linked (GlcNAc...) asparagine; by host glycosylation. The chain crosses the membrane as a helical span at residues 652–672 (WIPAGIGIIGVIIAIIALLCI). S-palmitoyl cysteine; by host attachment occurs at residues cysteine 671 and cysteine 673. At 673–677 (CKILC) the chain is on the cytoplasmic side.

Belongs to the filoviruses glycoprotein family. As to quaternary structure, homotrimer; each monomer consists of a GP1 and a GP2 subunit linked by disulfide bonds. The resulting peplomers (GP1,2) protrude from the virus surface as spikes. Interacts with host integrin alpha-V/ITGAV. Interacts with host CLEC10A. Binds also to host CD209 and CLEC4M/DC-SIGN(R). Interacts with host FOLR1. Interacts with BST2; this interaction inhibits the antiviral effect of BST2 and this allows viral release from infected cells. Interacts with host FCN1; this interaction enhances viral entry. Interacts with host TLR4; this interaction induces cell death in T-lymphocytes or proinflammatory cytokines and SOCS1 production in monocytes. Interacts with host entry receptor NPC1. In terms of assembly, GP1 and GP2delta are part of GP1,2delta soluble complexes released by ectodomain shedding. Post-translationally, the signal peptide region modulates GP's high mannose glycosylation, thereby determining the efficiency of the interactions with DC-SIGN(R). In terms of processing, N-glycosylated. O-glycosylated in the mucin-like region. Post-translationally, palmitoylation of GP2 is not required for its function. In terms of processing, specific enzymatic cleavages in vivo yield mature proteins. The precursor is processed into GP1 and GP2 by host cell furin in the trans Golgi, and maybe by other host proteases, to yield the mature GP1 and GP2 proteins. The cleavage site corresponds to the furin optimal cleavage sequence [KR]-X-[KR]-R. This cleavage does not seem to be required for function. After the internalization of the virus into cell endosomes, GP1 C-terminus is removed by the endosomal proteases cathepsin B, cathepsin L, or both, leaving a 19-kDa N-terminal fragment which is further digested by cathepsin B. Proteolytic processing of GP1,2 by host ADAM17 can remove the transmembrane anchor of GP2 and leads to shedding of complexes consisting in GP1 and truncated GP2 (GP1,2delta).

It is found in the virion membrane. It localises to the host cell membrane. The protein localises to the secreted. Its function is as follows. Trimeric GP1,2 complexes form the virion surface spikes and mediate the viral entry processes, with GP1 acting as the receptor-binding subunit and GP2 as the membrane fusion subunit. At later times of infection, down-regulates the expression of various host cell surface molecules that are essential for immune surveillance and cell adhesion. Down-modulates several integrins including ITGA1, ITGA2, ITGA3, ITGA4, ITGA5, ITGA6, ITGAV and ITGB1. This decrease in cell adhesion molecules may lead to cell detachment, contributing to the disruption of blood vessel integrity and hemorrhages developed during infection (cytotoxicity). Interacts with host TLR4 and thereby stimulates the differentiation and activation of monocytes leading to bystander death of T-lymphocytes. Down-regulates as well the function of host natural killer cells. Counteracts the antiviral effect of host BST2/tetherin that restricts release of progeny virions from infected cells. However, cooperates with VP40 and host BST2 to activate canonical NF-kappa-B pathway in a manner dependent on neddylation. Functions as a decoy for anti-GP1,2 antibodies thereby contributing to viral immune evasion. Interacts and activates host macrophages and dendritic cells inducing up-regulation of cytokine transcription. This effect is mediated throught activation of host TLR4. Functionally, responsible for binding to the receptor(s) on target cells. Interacts with CD209/DC-SIGN and CLEC4M/DC-SIGNR which act as cofactors for virus entry into dendritic cells (DCs) and endothelial cells. Binding to the macrophage specific lectin CLEC10A also seems to enhance virus infectivity. Interaction with FOLR1/folate receptor alpha may be a cofactor for virus entry in some cell types, although results are contradictory. Members of the Tyro3 receptor tyrosine kinase family also seem to be cell entry factors in filovirus infection. Once attached, the virions are internalized through clathrin-dependent endocytosis and/or macropinocytosis. After internalization of the virus into the endosomes of the host cell, proteolysis of GP1 by two cysteine proteases, CTSB/cathepsin B and CTSL/cathepsin L removes the glycan cap and allows GP1 binding to the host entry receptor NPC1. NPC1-binding, Ca(2+) and acidic pH induce a conformational change of GP2, which unmasks its fusion peptide and permit membranes fusion. In terms of biological role, acts as a class I viral fusion protein. Under the current model, the protein has at least 3 conformational states: pre-fusion native state, pre-hairpin intermediate state, and post-fusion hairpin state. During viral and target cell membrane fusion, the coiled coil regions (heptad repeats) assume a trimer-of-hairpins structure, positioning the fusion peptide in close proximity to the C-terminal region of the ectodomain. The formation of this structure appears to drive apposition and subsequent fusion of viral and target cell membranes. Responsible for penetration of the virus into the cell cytoplasm by mediating the fusion of the membrane of the endocytosed virus particle with the endosomal membrane. Low pH in endosomes induces an irreversible conformational change in GP2, releasing the fusion hydrophobic peptide. The chain is Envelope glycoprotein (GP) from Reston ebolavirus (strain Philippines-96) (REBOV).